A 239-amino-acid chain; its full sequence is Ribonuclease HII (239 aa).

Residues 30–221 (GPVAGVDEVG…VRRVATRSNG (192 aa)) enclose the RNase H type-2 domain. Residues aspartate 36, glutamate 37, and aspartate 130 each coordinate a divalent metal cation. Residues 217–239 (TRSNGAATAEREADPPQERDGTG) form a disordered region. Residues 225-239 (AEREADPPQERDGTG) are compositionally biased toward basic and acidic residues.

It belongs to the RNase HII family. Requires Mn(2+) as cofactor. The cofactor is Mg(2+).

The protein resides in the cytoplasm. The enzyme catalyses Endonucleolytic cleavage to 5'-phosphomonoester.. Its function is as follows. Endonuclease that specifically degrades the RNA of RNA-DNA hybrids. The chain is Ribonuclease HII from Mycobacterium ulcerans (strain Agy99).